The chain runs to 1081 residues: Inversin (1081 aa).

ANK repeat units lie at residues 13–42, 47–76, 80–110, 113–144, 148–177, 181–213, 220–250, 254–283, 288–317, 321–350, 356–385, 389–418, 422–451, 455–484, 488–517, and 523–553; these read SLAS…ALKD, FGRT…DVNK, SQRT…WMQK, EEMT…EVDT, NKQT…NIGI, EGKI…TESL, EGRT…NITS, LFRT…SGTI, QGAT…VKDD, EGRT…DIDI, YGGT…QVDA, MKHT…RVDL, DGHS…NPNV, AGRT…DPNI, EGRT…FPNQ, and ERYT…SIAA. Position 75 is a 3-hydroxyasparagine (Asn-75). Positions 490–498 match the D-box 1 motif; the sequence is RTALHWSCN. The IQ 1 domain occupies 555–584; sequence QDIAAFKIQAVYKGYKVRKAFRDRKNLLMK. Residues 589–610 show a composition bias toward basic and acidic residues; sequence RKDAAAKKREEENKRREAEQQK. Residues 589–889 form a disordered region; it reads RKDAAAKKRE…PAPGPLSGQS (301 aa). A compositionally biased stretch (polar residues) spans 638-649; sequence RAPSKQPPSSEA. Basic and acidic residues-rich tracts occupy residues 688 to 698, 724 to 740, and 772 to 785; these read KPNESPREQCK, EKSR…DKGK, and DGHR…DTAS. The segment covering 863–872 has biased composition (polar residues); sequence SGTSTLSEDA. The D-box 2 signature appears at 910–918; that stretch reads RKELFRKKN. The region spanning 917–946 is the IQ 2 domain; that stretch reads KNKAAAVIQRAWRSYQLRKHLSHLLHMKEL. One copy of the ANK 17 repeat lies at 1022-1050; the sequence is RTHSVLHLNSVSNLQCIHLLENSGRSKNF. A compositionally biased stretch (polar residues) spans 1051-1061; it reads SYNLQSATPPK. Residues 1051-1081 form a disordered region; the sequence is SYNLQSATPPKTKTKLRPSLEEECVRGSWNS.

As to quaternary structure, binds calmodulin via its IQ domains. Interacts with APC2. Interacts with alpha-, beta-, and gamma-catenin. Interacts with N-cadherin (CDH2). Interacts with NPHP1. Interacts with DVL1, PRICKLE (PRICKLE1 or PRICKLE2) and Strabismus (VANGL1 or VANGL2). Component of a complex containing at least ANKS6, INVS, NEK8 and NPHP3. ANKS6 may organize complex assembly by linking INVS and NPHP3 to NEK8 and INVS may target the complex to the proximal ciliary axoneme. Interacts with IQCB1; the interaction likely requires additional interactors. Interacts with microtubules. Post-translationally, may be ubiquitinated via its interaction with APC2. In terms of processing, hydroxylated at Asn-75, most probably by HIF1AN.

Its subcellular location is the cytoplasm. It localises to the cytoskeleton. It is found in the membrane. The protein localises to the spindle. The protein resides in the nucleus. In terms of biological role, required for normal renal development and establishment of left-right axis. Probably acts as a molecular switch between different Wnt signaling pathways. Inhibits the canonical Wnt pathway by targeting cytoplasmic disheveled (DVL1) for degradation by the ubiquitin-proteasome. This suggests that it is required in renal development to oppose the repression of terminal differentiation of tubular epithelial cells by Wnt signaling. Involved in the organization of apical junctions in kidney cells together with NPHP1, NPHP4 and RPGRIP1L/NPHP8. Does not seem to be strictly required for ciliogenesis. This Canis lupus familiaris (Dog) protein is Inversin (INVS).